The chain runs to 181 residues: Insulin-like growth factor 2 (181 aa).

The N-terminal stretch at 1-24 (MGIPVGKSLLMLFTFLAFASCCIA) is a signal peptide. The tract at residues 25 to 52 (AYRPSETLCGGELVDTLQFVCGDRGFYF) is b. 3 cysteine pairs are disulfide-bonded: C33-C71, C45-C84, and C70-C75. The segment at 53 to 64 (SRPASRINRRSR) is c. The interval 65 to 85 (GIVEECCFRSCDLALLETYCA) is a. The d stretch occupies residues 86-91 (TPAKSE). Residues 92 to 181 (RDVSTPPTVL…AFVEVSSDLQ (90 aa)) constitute a propeptide, e peptide. The O-linked (GalNAc...) threonine glycan is linked to T163.

This sequence belongs to the insulin family. As to quaternary structure, interacts with MYORG; this interaction is required for IGF2 secretion. Interacts with integrins ITGAV:ITGB3 and ITGA6:ITGB4; integrin-binding is required for IGF2 signaling. Interacts with IGFBP2. In terms of processing, proteolytically processed by PCSK4, proIGF2 is cleaved at Arg-128 and Arg-92 to generate big-IGF2 and mature IGF2.

It is found in the secreted. In terms of biological role, the insulin-like growth factors possess growth-promoting activity. Major fetal growth hormone in mammals. Plays a key role in regulating fetoplacental development. IGF2 is influenced by placental lactogen. Also involved in tissue differentiation. In adults, involved in glucose metabolism in adipose tissue, skeletal muscle and liver. Acts as a ligand for integrin which is required for IGF2 signaling. Positively regulates myogenic transcription factor MYOD1 function by facilitating the recruitment of transcriptional coactivators, thereby controlling muscle terminal differentiation. Inhibits myoblast differentiation and modulates metabolism via increasing the mitochondrial respiration rate. Preptin undergoes glucose-mediated co-secretion with insulin, and acts as a physiological amplifier of glucose-mediated insulin secretion. Exhibits osteogenic properties by increasing osteoblast mitogenic activity through phosphoactivation of MAPK1 and MAPK3. The protein is Insulin-like growth factor 2 of Equus caballus (Horse).